Consider the following 894-residue polypeptide: Histone-lysine N-methyltransferase PRDM9 (894 aa).

2 disordered regions span residues 1–23 (MSPE…RKPM) and 143–174 (SGSE…LRKK). Residues 23–86 (MVKDAFKDIS…RRQAIKLQVD (64 aa)) enclose the KRAB-related domain. A compositionally biased stretch (polar residues) spans 143–164 (SGSEQAQKPVSPSGEASTSGQH). Residues Cys-205, Cys-208, Cys-216, and His-219 each contribute to the Zn(2+) site. In terms of domain architecture, SET spans 244-358 (PGLRIGPSGI…PGCELLVWYG (115 aa)). Residues 256–258 (AGL), Tyr-291, and 320–321 (NC) contribute to the S-adenosyl-L-methionine site. Substrate is bound at residue 288–294 (NNGYSWL). Tyr-357 serves as a coordination point for substrate. Lys-368 is modified (N6,N6,N6-trimethyllysine; alternate). Residue Lys-368 is modified to N6-methyllysine; alternate. Residues Lys-372 and Lys-374 each carry the N6-methyllysine modification. The segment at 388–411 (HPCPSCCLAFSSQKFLSQHVERNH) adopts a C2H2-type 1 zinc-finger fold. Cys-390, Cys-393, His-406, and His-411 together coordinate Zn(2+). Residues 408–469 (ERNHSSQNFP…SKLLNKRTWQ (62 aa)) are disordered. Over residues 444–461 (PHSRNDKTKGQEIKERSK) the composition is skewed to basic and acidic residues. Residues 524–546 (VKYGECGQGFSVKSDVITHQRTH) form a C2H2-type 2; degenerate zinc finger. 12 C2H2-type zinc fingers span residues 552 to 574 (YVCR…QRIH), 580 to 602 (YVCR…QRTH), 608 to 630 (YVCR…QRRH), 636 to 658 (YVCR…QRRH), 664 to 686 (YVCR…QRTH), 692 to 714 (YVCR…QRTH), 720 to 742 (YVCR…QRTH), 748 to 770 (YVCR…QRTH), 776 to 798 (YVCR…QRTH), 804 to 826 (YVCR…QRTH), 832 to 854 (YVCR…QRTH), and 860 to 882 (YVCR…QRTH). Zn(2+) is bound by residues Cys-722, Cys-725, His-738, His-742, Cys-750, Cys-753, His-766, His-770, Cys-778, Cys-781, His-794, His-798, Cys-806, Cys-809, His-822, and His-826. The tract at residues 730 to 820 (SNKSHLLRHQ…RGFSNKSHLL (91 aa)) is DNA-binding.

This sequence belongs to the class V-like SAM-binding methyltransferase superfamily. Homodimer. Interacts with EHMT2 and CDYL; interaction only takes place when PRDM9 is bound to hotspot DNA. Interacts with CXXC1; this interaction does not link PRDM9-activated recombination hotspot sites with DSB machinery and is not required for the hotspot recognition pathway. Forms a complex with EWSR1, REC8, SYCP3 and SYCP1; complex formation is dependent of phosphorylated form of REC8 and requires PRDM9 bound to hotspot DNA; EWSR1 joins PRDM9 with the chromosomal axis through REC8. Mono-methylated; automethylated. Tri-methylated; automethylated. Mono-methylation is predominant; automethylation is lower and slower than H3 peptide methylation and is in a highest S-adenosyl-L-methionine concentration-dependent. There are two major sites for automethylation at Lys-368 and Lys-374. Lysines can be simultaneously methylated, such as Lys-368(me3)/Lys-372(me1), Lys-368(me1)/Lys-374(me1) and Lys-368(me1)/Lys-372(me1)/Lys-374(me1). Automethylation is an intramolecular (cis) process.

It localises to the nucleus. Its subcellular location is the chromosome. The enzyme catalyses L-lysyl-[protein] + S-adenosyl-L-methionine = N(6)-methyl-L-lysyl-[protein] + S-adenosyl-L-homocysteine + H(+). It catalyses the reaction N(6)-methyl-L-lysyl-[protein] + S-adenosyl-L-methionine = N(6),N(6)-dimethyl-L-lysyl-[protein] + S-adenosyl-L-homocysteine + H(+). It carries out the reaction L-lysyl(4)-[histone H3] + 3 S-adenosyl-L-methionine = N(6),N(6),N(6)-trimethyl-L-lysyl(4)-[histone H3] + 3 S-adenosyl-L-homocysteine + 3 H(+). The catalysed reaction is L-lysyl(36)-[histone H3] + 3 S-adenosyl-L-methionine = N(6),N(6),N(6)-trimethyl-L-lysyl(36)-[histone H3] + 3 S-adenosyl-L-homocysteine + 3 H(+). The enzyme catalyses L-lysyl(9)-[histone H3] + 3 S-adenosyl-L-methionine = N(6),N(6),N(6)-trimethyl-L-lysyl(9)-[histone H3] + 3 S-adenosyl-L-homocysteine + 3 H(+). It catalyses the reaction L-lysyl(20)-[histone H4] + S-adenosyl-L-methionine = N(6)-methyl-L-lysyl(20)-[histone H4] + S-adenosyl-L-homocysteine + H(+). It carries out the reaction N(6)-methyl-L-lysyl(20)-[histone H4] + S-adenosyl-L-methionine = N(6),N(6)-dimethyl-L-lysyl(20)-[histone H4] + S-adenosyl-L-homocysteine + H(+). Its activity is regulated as follows. Inhibited by suramin with an IC(50) of 4.1 uM. In terms of biological role, histone methyltransferase that sequentially mono-, di-, and tri-methylates both 'Lys-4' (H3K4) and 'Lys-36' (H3K36) of histone H3 to produce respectively trimethylated 'Lys-4' (H3K4me3) and trimethylated 'Lys-36' (H3K36me3) histone H3 and plays a key role in meiotic prophase by determining hotspot localization thereby promoting meiotic recombination. Can also methylate all four core histones with H3 being the best substrate and the most highly modified. Is also able, on one hand, to mono and di-methylate H4K20 and on other hand to trimethylate H3K9 with the di-methylated H3K9 as the best substrate. During meiotic prophase, binds specific DNA sequences through its zinc finger domains thereby determining hotspot localization where it promotes local H3K4me3 and H3K36me3 enrichment on the same nucleosomes through its histone methyltransferase activity. Thereby promotes double-stranded breaks (DSB) formation, at this subset of PRDM9-binding sites, that initiates meiotic recombination for the proper meiotic progression. During meiotic progression hotspot-bound PRDM9 interacts with several complexes; in early leptonema binds CDYL and EHMT2 followed by EWSR1 and CXXC1 by the end of leptonema. EWSR1 joins PRDM9 with the chromosomal axis through REC8. In this way, controls the DSB repair pathway, pairing of homologous chromosomes and sex body formation. Moreover plays a central role in the transcriptional activation of genes during early meiotic prophase thanks to H3K4me3 and H3K36me3 enrichment that represents a specific tag for epigenetic transcriptional activation. In addition performs automethylation. Acetylation and phosphorylation of histone H3 attenuate or prevent histone H3 methylation. In Homo sapiens (Human), this protein is Histone-lysine N-methyltransferase PRDM9.